The primary structure comprises 511 residues: 2,3-bisphosphoglycerate-independent phosphoglycerate mutase (511 aa).

Mn(2+) contacts are provided by Asp-12 and Ser-62. Catalysis depends on Ser-62, which acts as the Phosphoserine intermediate. Residues His-123, 153–154 (RD), Arg-185, Arg-191, 260–263 (RPDR), and Lys-333 contribute to the substrate site. Residues Asp-400, His-404, Asp-441, His-442, and His-460 each contribute to the Mn(2+) site.

It belongs to the BPG-independent phosphoglycerate mutase family. In terms of assembly, monomer. The cofactor is Mn(2+).

It catalyses the reaction (2R)-2-phosphoglycerate = (2R)-3-phosphoglycerate. It functions in the pathway carbohydrate degradation; glycolysis; pyruvate from D-glyceraldehyde 3-phosphate: step 3/5. Catalyzes the interconversion of 2-phosphoglycerate and 3-phosphoglycerate. This Clostridium novyi (strain NT) protein is 2,3-bisphosphoglycerate-independent phosphoglycerate mutase.